The primary structure comprises 426 residues: Chaperone SurA (426 aa).

The signal sequence occupies residues 1 to 19 (MGRVLVTIFVLFWPIGSFA). 2 PpiC domains span residues 169–270 (DAQY…KLLD) and 280–379 (VTQT…QVLD).

It localises to the periplasm. It carries out the reaction [protein]-peptidylproline (omega=180) = [protein]-peptidylproline (omega=0). Chaperone involved in the correct folding and assembly of outer membrane proteins. Recognizes specific patterns of aromatic residues and the orientation of their side chains, which are found more frequently in integral outer membrane proteins. May act in both early periplasmic and late outer membrane-associated steps of protein maturation. The chain is Chaperone SurA from Nitrosococcus oceani (strain ATCC 19707 / BCRC 17464 / JCM 30415 / NCIMB 11848 / C-107).